A 1787-amino-acid polypeptide reads, in one-letter code: Chitin synthase 5 (1787 aa).

The tract at residues 1-26 is disordered; it reads MASRRMSMYSVTSEGMGGPRGAGQQS. The N-linked (GlcNAc...) asparagine glycan is linked to asparagine 164. The interval 345-367 is disordered; sequence RIRDGDESSDGGRGARTPNSAED. N-linked (GlcNAc...) asparagine glycans are attached at residues asparagine 643, asparagine 657, asparagine 668, and asparagine 695. The next 2 helical transmembrane spans lie at 747-767 and 783-803; these read MWVA…LRYV and FVLC…IIFL. N-linked (GlcNAc...) asparagine glycosylation is found at asparagine 894 and asparagine 1018. Residues 1055–1075 traverse the membrane as a helical segment; the sequence is FLLAFAIIMCAVILLKFVSAL. N-linked (GlcNAc...) asparagine glycosylation is present at asparagine 1420. 3 helical membrane passes run 1445–1465, 1478–1498, and 1506–1526; these read FVVF…VYLG, FPLI…LIFI, and IGWM…LPIY. An N-linked (GlcNAc...) asparagine glycan is attached at asparagine 1533. The tract at residues 1628–1657 is disordered; it reads SPNSPAPYQHMSRSPTAYAGPTPYSDNPAA. Residues 1729 to 1785 enclose the DEK-C domain; the sequence is GPDDFQIVDAIRAVLMEVDLDTVTKKQVRALVEQRLQTELVGERRTFLDRQIDNELA.

Belongs to the chitin synthase family. Class V subfamily.

Its subcellular location is the cell membrane. It catalyses the reaction [(1-&gt;4)-N-acetyl-beta-D-glucosaminyl](n) + UDP-N-acetyl-alpha-D-glucosamine = [(1-&gt;4)-N-acetyl-beta-D-glucosaminyl](n+1) + UDP + H(+). Its function is as follows. Polymerizes chitin, a structural polymer of the cell wall and septum, by transferring the sugar moiety of UDP-GlcNAc to the non-reducing end of the growing chitin polymer. May play a minor overlapping role with CHS6 in growth and differentiation. This Pyricularia oryzae (strain 70-15 / ATCC MYA-4617 / FGSC 8958) (Rice blast fungus) protein is Chitin synthase 5.